Here is a 231-residue protein sequence, read N- to C-terminus: NKG2-C type II integral membrane protein (231 aa).

Residues 1–12 show a composition bias toward polar residues; that stretch reads MNKQRGTFSEVS. Residues 1–31 are disordered; the sequence is MNKQRGTFSEVSLAQDPKRQQRKPKDNKSSI. At 1–70 the chain is on the cytoplasmic side; that stretch reads MNKQRGTFSE…CQGLLPPPEK (70 aa). The span at 16–28 shows a compositional bias: basic and acidic residues; it reads DPKRQQRKPKDNK. A helical; Signal-anchor for type II membrane protein transmembrane segment spans residues 71-93; the sequence is LTAEVLGIICIVLMATVLKTVVL. Residues 94 to 231 lie on the Extracellular side of the membrane; sequence IPFLEQNNSF…SKRYYCKHKL (138 aa). Asn100 carries N-linked (GlcNAc...) asparagine glycosylation. Residues 116–229 enclose the C-type lectin domain; it reads HCPEEWITYS…GSSKRYYCKH (114 aa). 3 disulfides stabilise this stretch: Cys117-Cys128, Cys145-Cys227, and Cys206-Cys219. The N-linked (GlcNAc...) asparagine glycan is linked to Asn149.

Heterodimer with KLRD1; disulfide-linked. KLRD1-KLRC2 receptor complex interacts with TYROBP/DAP12 homodimer; this interaction is necessary for the expression on the cell surface. As to expression, natural killer cells.

It is found in the cell membrane. Its function is as follows. Immune activating receptor involved in self-nonself discrimination. In complex with KLRD1 on cytotoxic lymphocyte subsets, recognizes non-classical major histocompatibility MHC-E loaded with signal sequence-derived peptides from non-classical MHC-G molecules, likely playing a role in the generation and effector functions of adaptive natural killer (NK) cells and in maternal-fetal tolerance during pregnancy. Regulates the effector functions of terminally differentiated cytotoxic lymphocyte subsets, and in particular may play a role in adaptive NK cell response to viral infection. Upon MHC-E-peptide binding, transmits intracellular signals via the adapter protein TYROBP/DAP12, triggering the phosphorylation of proximal signaling molecules and cell activation. The chain is NKG2-C type II integral membrane protein (KLRC2) from Macaca mulatta (Rhesus macaque).